The following is a 159-amino-acid chain: Small ribosomal subunit protein uS7m (159 aa).

Belongs to the universal ribosomal protein uS7 family. In terms of assembly, part of the small ribosomal subunit.

It localises to the mitochondrion. In terms of biological role, one of the primary rRNA binding proteins, it binds directly to the small rRNA where it nucleates assembly of the head domain of the small subunit. This chain is Small ribosomal subunit protein uS7m (RPS7), found in Reclinomonas americana.